The following is a 236-amino-acid chain: Small ribosomal subunit protein uS2c (236 aa).

The protein belongs to the universal ribosomal protein uS2 family.

The protein resides in the plastid. Its subcellular location is the chloroplast. The chain is Small ribosomal subunit protein uS2c (rps2) from Triticum aestivum (Wheat).